A 504-amino-acid chain; its full sequence is MFS antiporter QDR2 (504 aa).

Positions 1–14 (MLSTTQSVTEPTEV) are enriched in polar residues. The segment at 1 to 23 (MLSTTQSVTEPTEVTSKKVEDIE) is disordered. Over 1 to 41 (MLSTTQSVTEPTEVTSKKVEDIEKENDEETPYSIFTSYDRL) the chain is Cytoplasmic. Residues 42–62 (VLIVILSLIGFWSTISSPIYF) traverse the membrane as a helical segment. Residues 63–75 (PALPTLTSYFHTS) lie on the Extracellular side of the membrane. A helical membrane pass occupies residues 76 to 96 (SSIMNISVVAYLIFQGIAPTI). At 97–106 (SSNLADTFGR) the chain is on the cytoplasmic side. A helical membrane pass occupies residues 107–129 (RPVILASIIVFCASCVAISQTNV). The Extracellular segment spans residues 130–132 (YWL). The chain crosses the membrane as a helical span at residues 133–155 (LAVLRCIQAAGIAAVISISSGVA). At 156–169 (GDVCTRANRGSMVG) the chain is on the cytoplasmic side. A helical transmembrane segment spans residues 170 to 190 (AVAGLQLVGNGIGGLVGAALI). At 191 to 198 (SSFNSWRS) the chain is on the extracellular side. Residues 199–219 (IFIFLTIGGGVTFILAIFILP) form a helical membrane-spanning segment. Residues 220–278 (ETSRKLVGNGSVVPKNILNKSPYIYLPHFKKRMNNDITTIVPATRFDLLGPLKIFFQKN) are Cytoplasmic-facing. A helical transmembrane segment spans residues 279-299 (VFCTLLPVGIHFAAWTMVLTS). At 300 to 311 (LSTELESRYHYS) the chain is on the extracellular side. Residues 312 to 332 (VMHVGLIYLPQGIACIAGSLV) form a helical membrane-spanning segment. Topologically, residues 333-370 (VGKSLDWYYRYRKTIYDQEVECLPLDERPQFNIVATRL) are cytoplasmic. A helical transmembrane segment spans residues 371-391 (TLSVVPALLMIIGLVIFGWCI). At 392 to 396 (QYKRH) the chain is on the extracellular side. The chain crosses the membrane as a helical span at residues 397–417 (IISIIISTILVSFSASVFIAI). At 418 to 438 (CTTMLVDLYPNNGSGSTSCLN) the chain is on the cytoplasmic side. The chain crosses the membrane as a helical span at residues 439–456 (LMRCWLAALGAGVLDSMI). Over 457-460 (NAMN) the chain is Extracellular. Residues 461–483 (VGGTYTVVAGFCILFDLALIYVL) traverse the membrane as a helical segment. At 484-504 (HNAKKKFSNSGPTTTKSPPKQ) the chain is on the cytoplasmic side.

Belongs to the major facilitator superfamily. CAR1 family.

The protein localises to the cell membrane. Functionally, MFS antiporter that does not display functional linkage as drug transporter and performs functions that significantly affect biofilm development and virulence. No substrate for transport has been identified yet, but plays an important role in the growth in the host. The sequence is that of MFS antiporter QDR2 (QDR2) from Candida albicans (strain SC5314 / ATCC MYA-2876) (Yeast).